The sequence spans 367 residues: Homoserine O-acetyltransferase (367 aa).

An AB hydrolase-1 domain is found at 41 to 339; it reads NLIVLEHALT…PVGHDAFLTE (299 aa). Serine 136 functions as the Nucleophile in the catalytic mechanism. Arginine 205 contacts substrate. Residues aspartate 303 and histidine 333 contribute to the active site. Substrate is bound at residue aspartate 334.

The protein belongs to the AB hydrolase superfamily. MetX family. In terms of assembly, homodimer.

The protein localises to the cytoplasm. It catalyses the reaction L-homoserine + acetyl-CoA = O-acetyl-L-homoserine + CoA. It functions in the pathway amino-acid biosynthesis; L-methionine biosynthesis via de novo pathway; O-acetyl-L-homoserine from L-homoserine: step 1/1. In terms of biological role, transfers an acetyl group from acetyl-CoA to L-homoserine, forming acetyl-L-homoserine. The chain is Homoserine O-acetyltransferase from Corynebacterium diphtheriae (strain ATCC 700971 / NCTC 13129 / Biotype gravis).